A 399-amino-acid chain; its full sequence is Acetate kinase (399 aa).

Asn-8 provides a ligand contact to Mg(2+). An ATP-binding site is contributed by Lys-15. Arg-89 serves as a coordination point for substrate. Asp-146 acts as the Proton donor/acceptor in catalysis. ATP is bound by residues 206 to 210 (HVGNG), 283 to 285 (DMR), and 331 to 335 (GMGEN). Glu-383 provides a ligand contact to Mg(2+).

The protein belongs to the acetokinase family. As to quaternary structure, homodimer. Mg(2+) is required as a cofactor. It depends on Mn(2+) as a cofactor.

Its subcellular location is the cytoplasm. It catalyses the reaction acetate + ATP = acetyl phosphate + ADP. It participates in metabolic intermediate biosynthesis; acetyl-CoA biosynthesis; acetyl-CoA from acetate: step 1/2. Functionally, catalyzes the formation of acetyl phosphate from acetate and ATP. Can also catalyze the reverse reaction. This Streptococcus equi subsp. equi (strain 4047) protein is Acetate kinase.